A 62-amino-acid polypeptide reads, in one-letter code: Large ribosomal subunit protein bL28 (62 aa).

It belongs to the bacterial ribosomal protein bL28 family.

The polypeptide is Large ribosomal subunit protein bL28 (Onion yellows phytoplasma (strain OY-M)).